We begin with the raw amino-acid sequence, 867 residues long: Glucans biosynthesis glucosyltransferase H (867 aa).

The tract at residues 71–91 (DDEGRTQLETMPKATRSSISP) is disordered. The next 6 helical transmembrane spans lie at 139–156 (YILLLLTFSQTALATWYM), 194–216 (ILILFAILFCWISAGFWTALMGF), 518–540 (VMSYLSAPLWFMFLALSTALQVV), 568–590 (IALLASTMVLLFLPKLLSILLIW), 603–625 (VTISLLLEVILSVLLAPVRMLFH), and 680–702 (FLFWLAPIVFSLILSPFVSVFSS).

This sequence belongs to the glycosyltransferase 2 family. OpgH subfamily.

The protein resides in the cell inner membrane. It participates in glycan metabolism; osmoregulated periplasmic glucan (OPG) biosynthesis. Functionally, involved in the biosynthesis of osmoregulated periplasmic glucans (OPGs). The protein is Glucans biosynthesis glucosyltransferase H of Nitrosomonas europaea (strain ATCC 19718 / CIP 103999 / KCTC 2705 / NBRC 14298).